Here is a 227-residue protein sequence, read N- to C-terminus: Probable maleylacetoacetate isomerase 2 (227 aa).

The 84-residue stretch at 14-97 (IQPILYSYWR…YLEETRPQRP (84 aa)) folds into the GST N-terminal domain. Residues 24–29 (SSCSWR), Gln-55, Val-69, 81–82 (ES), Gln-121, and 125–127 (NLI) contribute to the glutathione site. The 121-residue stretch at 102-222 (DVHKRAKVRE…HPSNQPDCPP (121 aa)) folds into the GST C-terminal domain.

This sequence belongs to the GST superfamily. Zeta family. Glutathione is required as a cofactor.

Its subcellular location is the cytoplasm. It catalyses the reaction 4-maleylacetoacetate = 4-fumarylacetoacetate. The catalysed reaction is RX + glutathione = an S-substituted glutathione + a halide anion + H(+). It participates in amino-acid degradation; L-phenylalanine degradation; acetoacetate and fumarate from L-phenylalanine: step 5/6. In terms of biological role, catalyzes the glutathione dependent oxygenation of dichloroacetic acid to glyoxylic acid in vitro. Has no glutathione thioltransferase activity with 4-hydroxynonenal (4-HNE), adrenochrome, phenethyl isothiocyanate (PEITC), 5-hydroperoxyeicosatetraenoic acid ((5S)-HpETE), prostaglandin A2 (PGA2) or 2-hydroxyethyldisulfide (HED). The sequence is that of Probable maleylacetoacetate isomerase 2 (GstZ2) from Drosophila melanogaster (Fruit fly).